Here is a 410-residue protein sequence, read N- to C-terminus: MQRLLFPPLRALKGRQYLPLLAPRAAPRAQCDCIRRPLRPGQYSTISEVALQSGRGTVSLPSKAAERVVGRWLLVCSGTVAGAVILGGVTRLTESGLSMVDWHLIKEMKPPTSQEEWEAEFQRYQQFPEFKILNHDMTLTEFKFIWYMEYSHRMWGRLVGLVYILPAAYFWRKGWLSRGMKGRVLALCGLVCFQGLLGWYMVKSGLEEKSDSHDIPRVSQYRLAAHLGSALVLYCASLWTSLSLLLPPHKLPETHQLLQLRRFAHGTAGLVFLTALSGAFVAGLDAGLVYNSFPKMGESWIPEDLFTFSPILRNVFENPTMVQFDHRILGITSVTAITVLYFLSRRIPLPRRTKMAAVTLLALAYTQVGLGISTLLMYVPTPLAATHQSGSLALLTGALWLMNELRRVPK.

Topologically, residues 1–67 (MQRLLFPPLR…VSLPSKAAER (67 aa)) are mitochondrial matrix. A helical membrane pass occupies residues 68-88 (VVGRWLLVCSGTVAGAVILGG). Over 89–153 (VTRLTESGLS…FIWYMEYSHR (65 aa)) the chain is Mitochondrial intermembrane. H152 serves as a coordination point for heme o. Residues 154–171 (MWGRLVGLVYILPAAYFW) traverse the membrane as a helical segment. Residues 172–183 (RKGWLSRGMKGR) lie on the Mitochondrial matrix side of the membrane. The helical transmembrane segment at 184–204 (VLALCGLVCFQGLLGWYMVKS) threads the bilayer. The Mitochondrial intermembrane segment spans residues 205-226 (GLEEKSDSHDIPRVSQYRLAAH). Heme o is bound at residue H226. A helical membrane pass occupies residues 227–247 (LGSALVLYCASLWTSLSLLLP). The Mitochondrial matrix segment spans residues 248 to 268 (PHKLPETHQLLQLRRFAHGTA). A helical membrane pass occupies residues 269 to 289 (GLVFLTALSGAFVAGLDAGLV). Topologically, residues 290-323 (YNSFPKMGESWIPEDLFTFSPILRNVFENPTMVQ) are mitochondrial intermembrane. A helical transmembrane segment spans residues 324–344 (FDHRILGITSVTAITVLYFLS). H326 lines the heme b pocket. Topologically, residues 345 to 356 (RRIPLPRRTKMA) are mitochondrial matrix. Residues 357–377 (AVTLLALAYTQVGLGISTLLM) traverse the membrane as a helical segment. Over 378-381 (YVPT) the chain is Mitochondrial intermembrane. Residues 382 to 402 (PLAATHQSGSLALLTGALWLM) traverse the membrane as a helical segment. H387 lines the heme b pocket. The Mitochondrial matrix segment spans residues 403–410 (NELRRVPK).

This sequence belongs to the COX15/CtaA family. Type 2 subfamily. Heme b is required as a cofactor. As to expression, predominantly found in tissues characterized by high rates of oxidative phosphorylation (OxPhos), including muscle, heart, and brain.

The protein localises to the mitochondrion inner membrane. It catalyses the reaction Fe(II)-heme o + 2 A + H2O = Fe(II)-heme a + 2 AH2. The protein operates within porphyrin-containing compound metabolism; heme A biosynthesis; heme A from heme O: step 1/1. In terms of biological role, catalyzes the second reaction in the biosynthesis of heme A, a prosthetic group of mitochondrial cytochrome c oxidase (CcO). Heme A is synthesized from heme B by two sequential enzymatic reactions catalyzed by heme O synthase (HOS) and heme A synthase (HAS). HAS catalyzes the conversion of heme O to heme A by two successive hydroxylations of the methyl group at C8, in a reaction that involves matrix ferredoxin and ferredoxin reductase. The first hydroxylation forms heme I, the second hydroxylation results in an unstable dihydroxymethyl group, which spontaneously dehydrates, resulting in the formyl group of heme A. This Homo sapiens (Human) protein is Heme A synthase COX15 (COX15).